We begin with the raw amino-acid sequence, 514 residues long: Na(+)/H(+) antiporter NhaB (514 aa).

The next 12 helical transmembrane spans lie at 23-43, 63-83, 97-117, 120-140, 144-164, 202-222, 238-258, 303-323, 357-377, 391-411, 447-467, and 475-495; these read LALL…PFVA, PLLP…TSAA, LLLM…LFIF, LLLS…AAAF, FLDA…FYGI, LMMH…VGEP, FFLR…LTCM, AVIG…VGLI, LTVF…APII, LFYL…VGTI, ATPN…APLI, and VWMA…CVEF.

The protein belongs to the NhaB Na(+)/H(+) (TC 2.A.34) antiporter family.

It is found in the cell inner membrane. The enzyme catalyses 2 Na(+)(in) + 3 H(+)(out) = 2 Na(+)(out) + 3 H(+)(in). Functionally, na(+)/H(+) antiporter that extrudes sodium in exchange for external protons. This Salmonella agona (strain SL483) protein is Na(+)/H(+) antiporter NhaB.